Reading from the N-terminus, the 224-residue chain is LexA repressor (224 aa).

The segment at residues 31–51 is a DNA-binding region (H-T-H motif); that stretch reads RAEIATELGFRSANAAEEHLQ. Active-site for autocatalytic cleavage activity residues include Ser-142 and Lys-179.

This sequence belongs to the peptidase S24 family. In terms of assembly, homodimer.

It carries out the reaction Hydrolysis of Ala-|-Gly bond in repressor LexA.. Represses a number of genes involved in the response to DNA damage (SOS response), including recA and lexA. In the presence of single-stranded DNA, RecA interacts with LexA causing an autocatalytic cleavage which disrupts the DNA-binding part of LexA, leading to derepression of the SOS regulon and eventually DNA repair. In Albidiferax ferrireducens (strain ATCC BAA-621 / DSM 15236 / T118) (Rhodoferax ferrireducens), this protein is LexA repressor.